Consider the following 967-residue polypeptide: LRR receptor-like serine/threonine-protein kinase ERL2 (967 aa).

An N-terminal signal peptide occupies residues 1-27; the sequence is MRRIETMKGLFFCLGMVVFMLLGSVSP. The Extracellular segment spans residues 28 to 585; sequence MNNEGKALMA…SLPKSQVFTR (558 aa). N-linked (GlcNAc...) asparagine glycans are attached at residues N70 and N79. LRR repeat units lie at residues 74–97, 98–120, 122–145, 146–166, 170–192, 194–216, 218–240, 242–261, 265–287, 289–311, 313–335, 337–359, 361–382, 385–406, 409–431, 433–456, 457–479, 481–503, 505–527, and 529–550; these read NVVSLNLSNLNLGGEISSALGDLM, NLQSIDLQGNKLGGQIPDEIGNC, SLAYVDFSTNLLFGDIPFSISKLK, QLEFLNLKNNQLTGPIPATLT, NLKTLDLARNQLTGEIPRLLYWN, VLQYLGLRGNMLTGTLSPDMCQL, GLWYFDVRGNNLTGTIPESIGNC, SFEILDVSYNQITGVIPYNI, QVATLSLQGNKLTGRIPEVIGLM, ALAVLDLSDNELTGPIPPILGNL, FTGKLYLHGNKLTGQIPPELGNM, RLSYLQLNDNELVGKIPPELGKL, QLFELNLANNNLVGLIPSNISS, ALNQFNVHGNFLSGAVPLEFRN, SLTYLNLSSNSFKGKIPAELGHI, NLDTLDLSGNNFSGSIPLTLGDLE, HLLILNLSRNHLNGTLPAEFGNL, SIQIIDVSFNFLAGVIPTELGQL, NINSLILNNNKIHGKIPDQLTNC, and SLANLNISFNNLSGIIPPMKNF. N-linked (GlcNAc...) asparagine glycans are attached at residues N228 and N239. N-linked (GlcNAc...) asparagine glycosylation is found at N310 and N334. A glycan (N-linked (GlcNAc...) asparagine) is linked at N379. N-linked (GlcNAc...) asparagine glycans are attached at residues N414, N443, N462, and N469. Residues N534, N539, and N549 are each glycosylated (N-linked (GlcNAc...) asparagine). The chain crosses the membrane as a helical span at residues 586-606; that stretch reads VAVICMVLGFITLICMIFIAV. Residues 607-967 are Cytoplasmic-facing; that stretch reads YKSKQQKPVL…FREDISKSSL (361 aa). 2 positions are modified to phosphothreonine: T640 and T648. In terms of domain architecture, Protein kinase spans 651-921; it reads LDEKYIIGYG…EVSRVLLSLV (271 aa). Residues 657–665 and K679 each bind ATP; that span reads IGYGASSTV. 2 positions are modified to phosphotyrosine: Y724 and Y763. Catalysis depends on D776, which acts as the Proton acceptor. Y818 bears the Phosphotyrosine mark. At T826 the chain carries Phosphothreonine. The tract at residues 921 to 955 is disordered; that stretch reads VPSPPPKKLPSPAKVQEGEERRESHSSDTTTPQWF. Over residues 936–946 the composition is skewed to basic and acidic residues; sequence QEGEERRESHS.

This sequence belongs to the protein kinase superfamily. Ser/Thr protein kinase family. Mostly expressed in developing organs, including bud clusters, flowers, siliques and young rosettes. Also detected in mature aboveground organs, such as leaves, stems and pedicels, but barely in roots.

It is found in the membrane. It catalyses the reaction L-seryl-[protein] + ATP = O-phospho-L-seryl-[protein] + ADP + H(+). The enzyme catalyses L-threonyl-[protein] + ATP = O-phospho-L-threonyl-[protein] + ADP + H(+). Receptor kinase that regulates inflorescence architecture and organ shape as well as stomatal patterning, including density and clustering, together with ERL1 and ER. This is LRR receptor-like serine/threonine-protein kinase ERL2 (ERL2) from Arabidopsis thaliana (Mouse-ear cress).